The primary structure comprises 437 residues: Type II methyltransferase M.HgiCII (437 aa).

The region spanning Phe4 to Glu431 is the SAM-dependent MTase C5-type domain. The active site involves Cys75.

It belongs to the class I-like SAM-binding methyltransferase superfamily. C5-methyltransferase family.

The enzyme catalyses a 2'-deoxycytidine in DNA + S-adenosyl-L-methionine = a 5-methyl-2'-deoxycytidine in DNA + S-adenosyl-L-homocysteine + H(+). Functionally, a methylase that recognizes the double-stranded sequence 5'-GGWCC-3', methylates C-? on both strands and protects the DNA from cleavage by the HgiCII endonuclease. In Herpetosiphon aurantiacus (Herpetosiphon giganteus), this protein is Type II methyltransferase M.HgiCII.